Reading from the N-terminus, the 578-residue chain is Dystrotelin (578 aa).

The ZZ-type zinc-finger motif lies at 223 to 279 (THPARCTLCRTFPITGLRYRCLKCLNFDICQMCFLSGLHSKSHQKSHPVIEHCIQMS). Positions 228, 231, 243, 246, 252, 255, 265, and 269 each coordinate Zn(2+). Positions 322 to 351 (HHAQARLLKKQLNQYKDKLQAIYTSQEERI) form a coiled coil. The tract at residues 382–475 (RLQPPGPSSS…QSQTQKMPQK (94 aa)) is disordered. 2 stretches are compositionally biased toward basic and acidic residues: residues 399 to 410 (KVDHSSTEKVPK) and 431 to 451 (PKLD…HALR). Polar residues predominate over residues 455–472 (SPETTLHSTRAQSQTQKM). Residues 503–537 (ALAAVEKKEAGNIKERKDELEEEELQELLSKLMDA) are a coiled coil.

It is found in the cell membrane. The polypeptide is Dystrotelin (DYTN) (Homo sapiens (Human)).